The sequence spans 986 residues: Rho guanine nucleotide exchange factor 2 (986 aa).

A Phorbol-ester/DAG-type zinc finger spans residues 39 to 86 (GHLFTTISVSGMTMCYACNKSITAKEALICPTCNVTIHNRCKDTLANC). Residues Ser-109, Ser-122, Ser-129, Ser-133, and Ser-137 each carry the phosphoserine modification. Residues 131-161 (RQSLLGSRRGRSSLSLAKSVSTTNIAGHFND) form an interaction with DYNLT1 region. Ser-143 is modified (phosphoserine; by PAK4). Residues Ser-151, Ser-163, Ser-172, Ser-174, and Ser-177 each carry the phosphoserine modification. One can recognise a DH domain in the interval 235 to 432 (KQQDVIYELI…KELLSNVDEG (198 aa)). Position 353 is an N6-acetyllysine (Lys-353). One can recognise a PH domain in the interval 472-571 (KLIHDGCLLW…WIRVIQQSVR (100 aa)). The stretch at 587–611 (EAYLRRIKMELQQKDRALVELLREK) forms a coiled coil. Phosphoserine occurs at positions 645 and 648. A Phosphothreonine; by MAPK1 or MAPK3 modification is found at Thr-679. The interval 683-705 (PALPLEPDSGGNTSPGVTANGEA) is disordered. 4 positions are modified to phosphoserine: Ser-691, Ser-696, Ser-711, and Ser-782. Residues 798 to 867 (EKQATELALL…RQLAALGQTE (70 aa)) adopt a coiled-coil conformation. The tract at residues 862 to 986 (ALGQTEPLPA…RDGEAVASES (125 aa)) is disordered. Position 886 is a phosphoserine; by PAK1 and AURKA (Ser-886). Position 894 is a phosphotyrosine (Tyr-894). Position 896 is a phosphoserine; by PAK4 (Ser-896). Basic and acidic residues predominate over residues 920-939 (RNFEDRERQELGSPEERLQD). Ser-932, Ser-940, and Ser-941 each carry phosphoserine. The span at 941 to 950 (SDPDTGSEEE) shows a compositional bias: acidic residues. A Phosphothreonine modification is found at Thr-945. Residues Ser-947, Ser-952, Ser-953, Ser-956, and Ser-960 each carry the phosphoserine modification.

As to quaternary structure, found in a complex composed at least of ARHGEF2, NOD2 and RIPK2. Interacts with RIPK2; the interaction mediates tyrosine phosphorylation of RIPK2 by Src kinase CSK. Interacts with RIPK1 and RIPK3. Interacts with YWHAZ/14-3-3 zeta; when phosphorylated at Ser-886. Interacts with the kinases PAK4, AURKA and MAPK1. Interacts with RHOA and RAC1. Interacts with NOD1. Interacts (via the N-terminal zinc finger) with CAPN6 (via domain II). Interacts with DYNLT1. In terms of processing, phosphorylation of Ser-886 by PAK1 induces binding to protein YWHAZ, promoting its relocation to microtubules and the inhibition of its activity. Phosphorylated by AURKA and CDK1 during mitosis, which negatively regulates its activity. Phosphorylation by MAPK1 or MAPK3 increases nucleotide exchange activity. Phosphorylation by PAK4 releases GEF-H1 from the microtubules. Phosphorylated on serine, threonine and tyrosine residues in a RIPK2-dependent manner.

The protein resides in the cytoplasm. Its subcellular location is the cytoskeleton. The protein localises to the cell junction. It localises to the tight junction. It is found in the golgi apparatus. The protein resides in the spindle. Its subcellular location is the cell projection. The protein localises to the ruffle membrane. It localises to the cytoplasmic vesicle. Its function is as follows. Activates Rho-GTPases by promoting the exchange of GDP for GTP. May be involved in epithelial barrier permeability, cell motility and polarization, dendritic spine morphology, antigen presentation, leukemic cell differentiation, cell cycle regulation, innate immune response, and cancer. Binds Rac-GTPases, but does not seem to promote nucleotide exchange activity toward Rac-GTPases, which was uniquely reported in PubMed:9857026. May stimulate instead the cortical activity of Rac. Inactive toward CDC42, TC10, or Ras-GTPases. Forms an intracellular sensing system along with NOD1 for the detection of microbial effectors during cell invasion by pathogens. Required for RHOA and RIP2 dependent NF-kappaB signaling pathways activation upon S.flexneri cell invasion. Involved not only in sensing peptidoglycan (PGN)-derived muropeptides through NOD1 that is independent of its GEF activity, but also in the activation of NF-kappaB by Shigella effector proteins (IpgB2 and OspB) which requires its GEF activity and the activation of RhoA. Involved in innate immune signaling transduction pathway promoting cytokine IL6/interleukin-6 and TNF-alpha secretion in macrophage upon stimulation by bacterial peptidoglycans; acts as a signaling intermediate between NOD2 receptor and RIPK2 kinase. Contributes to the tyrosine phosphorylation of RIPK2 through Src tyrosine kinase leading to NF-kappaB activation by NOD2. Overexpression activates Rho-, but not Rac-GTPases, and increases paracellular permeability. Involved in neuronal progenitor cell division and differentiation. Involved in the migration of precerebellar neurons. The sequence is that of Rho guanine nucleotide exchange factor 2 (ARHGEF2) from Homo sapiens (Human).